The sequence spans 868 residues: Rifampicin phosphotransferase (868 aa).

The ATP-binding stretch occupies residues 5–317 (TERYVLDLQE…FHIVQSRPIT (313 aa)). Residues Lys26, Arg120, Gly135, Thr139, Gln186, Glu300, Gln312, and Arg314 each coordinate ATP. The tract at residues 330–755 (NHVYVSVGHQ…TSDGEALTGA (426 aa)) is rifampicin-binding. Residues 410 to 430 (FVPSLPDAPPAGPRAGAAPEP) are disordered. A swivel phosphohistidine region spans residues 768 to 866 (GLPVSTGTVE…VHGTDGYIEI (99 aa)). Residue His826 is the Tele-phosphohistidine intermediate of the active site.

The protein belongs to the rifampicin phosphotransferase family.

The catalysed reaction is rifampicin + ATP + H2O = 21-phosphorifampicin + AMP + phosphate + 2 H(+). Functionally, catalyzes the phosphorylation of rifampicin, also known as rifampin (RIF), leading to its inactivation. Confers high level resistance to a variety of clinically used rifamycin antibiotics. Does not show phosphoenolpyruvate (PEP) synthase activity. The chain is Rifampicin phosphotransferase from Streptomyces sviceus (strain ATCC 29083 / DSM 924 / JCM 4929 / NBRC 13980 / NCIMB 11184 / NRRL 5439 / UC 5370).